The chain runs to 115 residues: MITLFLILCYFILIFNIIVPAISEKMRRERAAYVNYKRLNKNFICVDDRLFSYNFTTSGIKAKVAVNKNVPIPCSKINEVNNKDVDTLYCDKDRDDIPGFARSCYRAYSDLFFTT.

The helical; Signal-anchor for type III membrane protein transmembrane segment at 1 to 21 (MITLFLILCYFILIFNIIVPA) threads the bilayer.

It belongs to the orthopoxvirus OPG147 family. As to quaternary structure, part of a stable entry-fusion complex (EFC) which is at least composed of proteins OPG143, OPG147, OPG155, OPG086, OPG094, OPG107, OPG104, and OPG099. Formation of the viral membrane is necessary for the assembly of the complex. Contains two intramolecular disulfide bonds. They are created by the viral disulfide bond formation pathway, a poxvirus-specific pathway that operates on the cytoplasmic side of the MV membranes.

It localises to the virion membrane. In terms of biological role, envelope protein part of the entry-fusion complex responsible for the virus membrane fusion with host cell membrane during virus entry. Also plays a role in cell-cell fusion (syncytium formation). This Monkeypox virus protein is Virion membrane protein OPG147 (OPG147).